The following is a 668-amino-acid chain: MTLYDENNLHIIKDNLRYLKLLSKQYPSISSASSEIINLQAILNLPKGTEHFISDVHGEYESFTHMLKNASGVIKRKIDDVFGTSLRECDKKNLATLIYYPEQKLDLIKKSEKNLEDWYKITLYRLIRLCQIVSSKYTRSKVRKSLPSDFAYIIEELLNEQGDRVDKQEYYNSIIETIIDIDRASEFIIAISNVIQRLVVDKLHIIGDIYDRGPGAEIIIEALSKHHSIDIQWGNHDIVWMGAAAGCEACIANVIRISLRYANLSTLEDGYGINLLPLATFAMDFYKEDNCENFKPRTIDKNLNETDIKLLSKMHKAISIIQFKLEGKIIKRRPEFKMEERLLLDKINIKEGTLSLNEKIYKLIDTNFPTLDKENPYELNERERDLVEKLTNSFINSEKLQRHIKFLYSNGSLYLKYNSNLLYHGCIPLNEDGSLKEVTLCKETLKGKSLLDKLDRLAREAYFFKKDPESKLYGMDMMWYLWCGSNSPLFGKKKMTTFERYFLDDKNTHKEEKNPYYKYRNDEKMCTMIFEEFELDADNSHIINGHIPVKTKEGENPIKANGKLLVIDGGFCKAYQPQTGIAGYTLIYNSYGLLLTSHEPFSSIHKAIVEGNDILSSTTILEHVSSRKRVLDTDSGEEIKKQIHDLEMLLVAYRKGLIKEENEANIRF.

Belongs to the FBPase class 3 family. It depends on Mn(2+) as a cofactor.

The enzyme catalyses beta-D-fructose 1,6-bisphosphate + H2O = beta-D-fructose 6-phosphate + phosphate. Its pathway is carbohydrate biosynthesis; gluconeogenesis. This is Fructose-1,6-bisphosphatase class 3 from Clostridium botulinum (strain Langeland / NCTC 10281 / Type F).